Reading from the N-terminus, the 37-residue chain is U1-ectatotoxin-Eb1a subunit B (37 aa).

The protein belongs to the ectatomin family. Ectatomin-Eq subfamily. In terms of assembly, heterodimer of subunits A and B; disulfide-linked. In terms of tissue distribution, expressed by the venom gland.

The protein localises to the secreted. It localises to the target cell membrane. The sequence is that of U1-ectatotoxin-Eb1a subunit B from Ectatomma brunneum (Ant).